The primary structure comprises 180 residues: Shikimate kinase (180 aa).

14-19 (GAGKSC) is a binding site for ATP. Serine 18 contacts Mg(2+). Aspartate 36, arginine 60, and glycine 82 together coordinate substrate. Arginine 120 is an ATP binding site. Residue arginine 139 participates in substrate binding.

Belongs to the shikimate kinase family. Monomer. Mg(2+) serves as cofactor.

The protein localises to the cytoplasm. The enzyme catalyses shikimate + ATP = 3-phosphoshikimate + ADP + H(+). It functions in the pathway metabolic intermediate biosynthesis; chorismate biosynthesis; chorismate from D-erythrose 4-phosphate and phosphoenolpyruvate: step 5/7. Catalyzes the specific phosphorylation of the 3-hydroxyl group of shikimic acid using ATP as a cosubstrate. The protein is Shikimate kinase of Xanthomonas axonopodis pv. citri (strain 306).